A 325-amino-acid polypeptide reads, in one-letter code: ATP phosphoribosyltransferase (325 aa).

It belongs to the ATP phosphoribosyltransferase family. Long subfamily. The cofactor is Mg(2+).

The protein localises to the cytoplasm. It carries out the reaction 1-(5-phospho-beta-D-ribosyl)-ATP + diphosphate = 5-phospho-alpha-D-ribose 1-diphosphate + ATP. It participates in amino-acid biosynthesis; L-histidine biosynthesis; L-histidine from 5-phospho-alpha-D-ribose 1-diphosphate: step 1/9. Feedback inhibited by histidine. Catalyzes the condensation of ATP and 5-phosphoribose 1-diphosphate to form N'-(5'-phosphoribosyl)-ATP (PR-ATP). Has a crucial role in the pathway because the rate of histidine biosynthesis seems to be controlled primarily by regulation of HisG enzymatic activity. This is ATP phosphoribosyltransferase from Rhodopseudomonas palustris (strain BisB18).